Reading from the N-terminus, the 233-residue chain is MADS-box transcription factor 56 (233 aa).

Residues 1–61 enclose the MADS-box domain; it reads MVRGRTELKR…GRLYEFASAP (61 aa). Residues 87–177 enclose the K-box domain; sequence IQQVKDDTLG…RGKHRNLEAA (91 aa).

The protein localises to the nucleus. Probable transcription factor. This is MADS-box transcription factor 56 (MADS56) from Oryza sativa subsp. japonica (Rice).